The primary structure comprises 224 residues: 4-aminobenzoate synthase (224 aa).

Residues Glu77, His84, Glu138, His169, Asp173, and His176 each contribute to the Fe(2+) site.

The protein belongs to the CADD family. In terms of assembly, homodimer. The cofactor is Fe(2+). Mn(2+) serves as cofactor.

Its function is as follows. Involved in de novo para-aminobenzoate (PABA) biosynthesis. Acts as a self-sacrificing or 'suicide' enzyme that utilizes its own active site tyrosine residue(s) as the substrate for PABA synthesis. The side chain of the tyrosine residue is released from the protein backbone via cleavage of the C(alpha)-C(beta) bond, leaving a glycine in place of the original tyrosine residue. Reaction requires O(2) and a reduced dimetal cofactor. The chain is 4-aminobenzoate synthase from Chlamydia pneumoniae (Chlamydophila pneumoniae).